The sequence spans 104 residues: Type IV secretion system protein PtlB homolog (104 aa).

A helical transmembrane segment spans residues 30–50; sequence IALLGIWFSIAFLALFPVALL.

This sequence belongs to the virB3 family.

Its subcellular location is the cell membrane. The protein is Type IV secretion system protein PtlB homolog (ptlB) of Bordetella parapertussis (strain 12822 / ATCC BAA-587 / NCTC 13253).